A 404-amino-acid chain; its full sequence is Argininosuccinate synthase (404 aa).

ATP is bound by residues 10-18 and A38; that span reads AYSGGVDTS. Y89 is an L-citrulline binding site. Residue G119 coordinates ATP. Residues T121, N125, and D126 each contribute to the L-aspartate site. Residue N125 participates in L-citrulline binding. L-citrulline-binding residues include R129, S177, S186, E262, and Y274.

It belongs to the argininosuccinate synthase family. Type 1 subfamily. As to quaternary structure, homotetramer.

It is found in the cytoplasm. The catalysed reaction is L-citrulline + L-aspartate + ATP = 2-(N(omega)-L-arginino)succinate + AMP + diphosphate + H(+). It functions in the pathway amino-acid biosynthesis; L-arginine biosynthesis; L-arginine from L-ornithine and carbamoyl phosphate: step 2/3. This chain is Argininosuccinate synthase, found in Prochlorococcus marinus subsp. pastoris (strain CCMP1986 / NIES-2087 / MED4).